The chain runs to 353 residues: Guanine nucleotide-binding protein subunit beta-5 (353 aa).

7 WD repeats span residues 61 to 100, 103 to 142, 151 to 192, 194 to 236, 237 to 276, 278 to 320, and 323 to 352; these read GHGN…KEHA, MPCT…NENM, MHTN…QSFH, HGAD…QAFE, THES…EVAI, SKES…RVSI, and GHEN…LRVW.

This sequence belongs to the WD repeat G protein beta family. Component of a complex composed of RGS9 (isoform RGS9-1), GNB5 and RGS9BP; within this complex, the presence of GNB5 stabilizes both itself and RGS9 and increases RGS9 GTPase-activating protein (GAP) activity. Interacts with RGS7, forming the RGS7-GNB5 complex; within this complex, the presence of GNB5 increases RGS7 GTPase-activating protein (GAP) activity. Interacts with GPR158; promotes the GTPase activator activity of the RGS7-GNB5 complex in absence of glycine, in contrast GTPase activator activity of the RGS7-GNB5 complex is inhibited in presence of glycine. Interacts with RGS6.

Its subcellular location is the membrane. Functionally, enhances GTPase-activating protein (GAP) activity of regulator of G protein signaling (RGS) proteins, such as RGS7 and RGS9, hence involved in the termination of the signaling initiated by the G protein coupled receptors (GPCRs) by accelerating the GTP hydrolysis on the G-alpha subunits, thereby promoting their inactivation. Increases RGS7 GTPase-activating protein (GAP) activity, thereby regulating mood and cognition. Increases RGS9 GTPase-activating protein (GAP) activity, hence contributes to the deactivation of G protein signaling initiated by D(2) dopamine receptors. May play an important role in neuronal signaling, including in the parasympathetic, but not sympathetic, control of heart rate. The chain is Guanine nucleotide-binding protein subunit beta-5 (GNB5) from Oryctolagus cuniculus (Rabbit).